Consider the following 82-residue polypeptide: Small ribosomal subunit protein bS16 (82 aa).

It belongs to the bacterial ribosomal protein bS16 family.

The sequence is that of Small ribosomal subunit protein bS16 from Vibrio atlanticus (strain LGP32) (Vibrio splendidus (strain Mel32)).